The sequence spans 206 residues: Sclerostin domain-containing protein 1 (206 aa).

The first 23 residues, 1 to 23 (MLPPAIHLSLIPLLCILMRNCLA), serve as a signal peptide directing secretion. Residues 42 to 62 (AHPSSNSTLNQARNGGRHFSS) form a disordered region. Polar residues predominate over residues 44 to 62 (PSSNSTLNQARNGGRHFSS). N-linked (GlcNAc...) asparagine glycosylation occurs at asparagine 47. 4 disulfide bridges follow: cysteine 75/cysteine 133, cysteine 89/cysteine 147, cysteine 100/cysteine 163, and cysteine 104/cysteine 165. The region spanning 75-170 (CRELRSTKYI…TACKCKRYTR (96 aa)) is the CTCK domain. A glycan (N-linked (GlcNAc...) asparagine) is linked at asparagine 173. The segment at 176-206 (SHNFESVSPAKPAQHHRERKRASKSSKHSLS) is disordered. The segment covering 188-206 (AQHHRERKRASKSSKHSLS) has biased composition (basic residues).

This sequence belongs to the sclerostin family. Interacts with BMP2, BMP4, BMP6 and BMP7 with high affinity. As to expression, highly expressed in kidney at renal collecting ducts level and weakly in brain.

It localises to the secreted. In terms of biological role, may be involved in the onset of endometrial receptivity for implantation/sensitization for the decidual cell reaction. Enhances Wnt signaling and inhibits TGF-beta signaling. Directly antagonizes activity of BMP2, BMP4, BMP6 and BMP7 in a dose-dependent manner. This is Sclerostin domain-containing protein 1 (Sostdc1) from Mus musculus (Mouse).